The sequence spans 541 residues: Phenazine N-monooxygenase PhzNO1 (541 aa).

FAD is bound by residues Asp-39, Thr-47 to Trp-50, Asp-59 to Thr-60, Tyr-65, and Ile-112. An NADP(+)-binding site is contributed by Arg-57–Asp-59. NADP(+) contacts are provided by residues Thr-186 to Gln-192, Arg-209 to Ser-210, and Trp-492.

It belongs to the FAD-binding monooxygenase family. The cofactor is FAD.

The catalysed reaction is 1,6-dihydroxyphenazine + NADPH + O2 = 1,6-dihydroxyphenazine N(5)-oxide + NADP(+) + H2O. It catalyses the reaction 1,6-dihydroxyphenazine N(5)-oxide + NADPH + O2 = 1,6-dihydroxyphenazine N(5),N(10)-dioxide + NADP(+) + H2O. The enzyme catalyses 1-hydroxy-6-methoxyphenazine + NADPH + O2 = 1-hydroxy-6-methoxyphenazine N(10)-oxide + NADP(+) + H2O. It carries out the reaction quinolin-8-ol + NADPH + O2 = 8-hydroxyquinoline N-oxide + NADP(+) + H2O. Its function is as follows. Involved in the biosynthesis of phenazine natural products including myxin, an N(5),N(10)-dioxide phenazine antiobiotic, which has antimicrobial activity. Catalyzes the aromatic N-oxidations of phenazines, such as 1,6-dihydroxyphenazine (DHP), 1,6-dihydroxyphenazine N(5)-oxide (DHPO) and 1-hydroxy-6-methoxyphenazine to produce DHPO, iodinin (1,6-dihydroxyphenazine N(5),N(10)-dioxide) and 1-hydroxy-6-methoxyphenazine N(10)-oxide, respectively. Also catalyzes the N-oxidation of 8-hydroxyquinoline, but not 6-hydroxyquinoline (6-HQ), quinoline, quinoxaline, quinine and 2-phenylpyridine. The sequence is that of Phenazine N-monooxygenase PhzNO1 from Lysobacter antibioticus.